The sequence spans 336 residues: Inositol 2-dehydrogenase (336 aa).

The protein belongs to the Gfo/Idh/MocA family. In terms of assembly, homotetramer.

The enzyme catalyses myo-inositol + NAD(+) = scyllo-inosose + NADH + H(+). Involved in the oxidation of myo-inositol (MI) to 2-keto-myo-inositol (2KMI or 2-inosose). The polypeptide is Inositol 2-dehydrogenase (Pseudomonas savastanoi pv. phaseolicola (strain 1448A / Race 6) (Pseudomonas syringae pv. phaseolicola (strain 1448A / Race 6))).